Here is a 2835-residue protein sequence, read N- to C-terminus: Vanchrobactin synthetase VabF (2835 aa).

The tract at residues 16–452 (EDQWPLIGTQ…IPPSEKQQIT (437 aa)) is condensation 1. The tract at residues 473–880 (QQTVESKPNE…GRCDHQIKIR (408 aa)) is adenylation 1. The Carrier 1 domain maps to 988 to 1062 (APITQPEQLL…MMAGQMVPLQ (75 aa)). Residue S1023 is modified to O-(pantetheine 4'-phosphoryl)serine. Condensation stretches follow at residues 1081–1499 (WFEE…KIQQ) and 1539–1961 (DVLP…EWDL). The tract at residues 1992-2394 (QQQRSPHQLA…GRSDDQIKIR (403 aa)) is adenylation 2. Residues 2503–2578 (NAHPGLETQL…KLASLLLDDD (76 aa)) form the Carrier 2 domain. S2538 carries the post-translational modification O-(pantetheine 4'-phosphoryl)serine. Positions 2601–2821 (ALFCVNSASG…APENVRQIGE (221 aa)) are thioesterase.

This sequence belongs to the NRP synthetase family. Pantetheine 4'-phosphate is required as a cofactor.

It catalyses the reaction holo-[peptidyl-carrier protein] + L-arginine + ATP = L-arginyl-[peptidyl-carrier protein] + AMP + diphosphate. The enzyme catalyses holo-[peptidyl-carrier protein] + L-serine + ATP = L-seryl-[peptidyl-carrier protein] + AMP + diphosphate. Its pathway is siderophore biosynthesis. Functionally, involved in the synthesis of the siderophore vanchrobactin. Probably adenylates L-arginine via its first adenylation domain and loads it onto its first peptidyl carrier domain via a thioester linkage to the phosphopanthetheine moiety. In addition, may adenylate L-serine via its second adenylation domain and loads it onto its second peptidyl carrier domain via a thioester linkage to the phosphopanthetheine moiety. The thioesterase domain may release vanchrobactin after condensation of the siderophore components. In Vibrio anguillarum (Listonella anguillarum), this protein is Vanchrobactin synthetase VabF.